The primary structure comprises 441 residues: Polycomb protein EED (441 aa).

The disordered stretch occupies residues 1–72 (MSEREVSTVP…PGRKSWGKGK (72 aa)). Position 2 is an N-acetylserine (Ser2). Phosphoserine occurs at positions 2 and 34. Residues 45–61 (ESGTNTERPDTPTNTPN) are compositionally biased toward polar residues. Thr55 bears the Phosphothreonine mark. At Lys66 the chain carries N6,N6,N6-trimethyllysine; alternate. The residue at position 66 (Lys66) is an N6,N6-dimethyllysine; alternate. An N6-methyllysine; alternate modification is found at Lys66. Residues 81–441 (SFKCVNSLKE…ASIWRWDRLR (361 aa)) are interaction with EZH2. WD repeat units lie at residues 91 to 134 (DHNQ…EIRL), 142 to 185 (DADE…CIKH), 188 to 228 (GHGN…LVAI), and 234 to 275 (GHRD…NAIK). An N6,N6,N6-trimethyllysine; alternate mark is found at Lys197, Lys268, and Lys284. Residues Lys197, Lys268, and Lys284 each carry the N6,N6-dimethyllysine; alternate modification. 3 positions are modified to N6-methyllysine; alternate: Lys197, Lys268, and Lys284. WD repeat units lie at residues 304–341 (IHRN…DDID), 359–399 (SQCD…PHKA), and 408–441 (KCGA…DRLR).

The protein belongs to the WD repeat ESC family. In terms of assembly, component of the PRC2/EED-EZH2 complex, which includes EED, EZH2, SUZ12, RBBP4 and RBBP7 and possibly AEBP2. The minimum components required for methyltransferase activity of the PRC2/EED-EZH2 complex are EED, EZH2 and SUZ12. Component of the PRC2/EED-EZH1 complex, which includes EED, EZH1, SUZ12, RBBP4 and AEBP2. The PRC2 complex may also interact with DNMT1, DNMT3A, DNMT3B and PHF1 via the EZH2 subunit and with SIRT1 via the SUZ12 subunit. Interacts with HDAC, HDAC2, histone H1, KMT2A/MLL1 and YY1. May interact with ITGA4, ITGAE and ITGB7. Interacts with CDYL. Interacts with BMAL1. In terms of processing, methylated. Binding to histone H1 'Lys-26' promotes mono-, di-, and trimethylation of internal lysines.

The protein resides in the nucleus. In terms of biological role, polycomb group (PcG) protein. Component of the PRC2/EED-EZH2 complex, which methylates 'Lys-9' and 'Lys-27' of histone H3, leading to transcriptional repression of the affected target gene. Also recognizes 'Lys-26' trimethylated histone H1 with the effect of inhibiting PRC2 complex methyltransferase activity on nucleosomal histone H3 'Lys-27', whereas H3 'Lys-27' recognition has the opposite effect, enabling the propagation of this repressive mark. The PRC2/EED-EZH2 complex may also serve as a recruiting platform for DNA methyltransferases, thereby linking two epigenetic repression systems. In Bos taurus (Bovine), this protein is Polycomb protein EED (EED).